A 129-amino-acid polypeptide reads, in one-letter code: Ig lambda-1 chain V regions MOPC 104E/RPC20/J558/S104 (129 aa).

Positions 1 to 19 (MAWISLILSLLALSSGAIS) are cleaved as a signal peptide. Residue glutamine 20 is modified to Pyrrolidone carboxylic acid. The Ig-like domain occupies 20–125 (QAVVTQESAL…HWVFGGGTKL (106 aa)).

This is Ig lambda-1 chain V regions MOPC 104E/RPC20/J558/S104 from Mus musculus (Mouse).